The sequence spans 152 residues: Ribosome maturation factor RimP (152 aa).

It belongs to the RimP family.

It is found in the cytoplasm. In terms of biological role, required for maturation of 30S ribosomal subunits. This chain is Ribosome maturation factor RimP, found in Photorhabdus laumondii subsp. laumondii (strain DSM 15139 / CIP 105565 / TT01) (Photorhabdus luminescens subsp. laumondii).